Consider the following 449-residue polypeptide: Wilms tumor protein homolog (449 aa).

The tract at residues 48 to 84 is disordered; the sequence is YGSLGGPAPPPAPPPPPPPPPHSFIKQEPSWGGAEPH. Residues 54-69 are compositionally biased toward pro residues; sequence PAPPPAPPPPPPPPPH. Residues K73 and K177 each participate in a glycyl lysine isopeptide (Lys-Gly) (interchain with G-Cter in SUMO) cross-link. A 9aaTAD motif is present at residues 236–244; that stretch reads MTWNQMNLG. C2H2-type zinc fingers lie at residues 323–347, 353–377, and 383–405; these read FMCA…SRKH, YQCD…QRRH, and FQCK…TRTH. Important for interaction with target DNA regions lie at residues 367-381 and 393-401; these read SDQL…TGVK and SRSDHLKTH. The KTS motif signature appears at 408–410; sequence KTS. A C2H2-type 4 zinc finger spans residues 414–438; the sequence is FSCRWPSCQKKFARSDELVRHHNMH. Residue K444 forms a Glycyl lysine isopeptide (Lys-Gly) (interchain with G-Cter in SUMO2) linkage.

The protein belongs to the EGR C2H2-type zinc-finger protein family. As to quaternary structure, interacts with ZNF224 via the zinc-finger region. Interacts with WTAP, AMER1 and SRY. Homodimer. Interacts with WTIP. Interacts with actively translating polysomes. Detected in nuclear ribonucleoprotein (mRNP) particles. Interacts with U2AF2. Interacts with HNRNPU via the zinc-finger region. Interacts with CITED2. Interacts with RBM4.

Its subcellular location is the nucleus speckle. It localises to the nucleus. It is found in the nucleoplasm. The protein localises to the nucleolus. The protein resides in the cytoplasm. In terms of biological role, transcription factor that plays an important role in cellular development and cell survival. Recognizes and binds to the DNA sequence 5'-GCG(T/G)GGGCG-3'. Regulates the expression of numerous target genes, including EPO. Plays an essential role for development of the urogenital system. It has a tumor suppressor as well as an oncogenic role in tumor formation. Function may be isoform-specific: isoforms lacking the KTS motif may act as transcription factors. Isoforms containing the KTS motif may bind mRNA and play a role in mRNA metabolism or splicing. Isoform 1 has lower affinity for DNA, and can bind RNA. In Sus scrofa (Pig), this protein is Wilms tumor protein homolog (WT1).